Reading from the N-terminus, the 79-residue chain is Small ribosomal subunit protein bS18 (79 aa).

Belongs to the bacterial ribosomal protein bS18 family. In terms of assembly, part of the 30S ribosomal subunit. Forms a tight heterodimer with protein bS6.

Functionally, binds as a heterodimer with protein bS6 to the central domain of the 16S rRNA, where it helps stabilize the platform of the 30S subunit. This chain is Small ribosomal subunit protein bS18, found in Streptococcus agalactiae serotype Ia (strain ATCC 27591 / A909 / CDC SS700).